The following is a 291-amino-acid chain: Lys-63-specific deubiquitinase BRCC36-like (291 aa).

The region spanning 12–179 (VYLESDAFLV…YTCFQSVQAS (168 aa)) is the MPN domain. Positions 122, 124, and 135 each coordinate Zn(2+). A JAMM motif motif is present at residues 122–135 (HSHPHITVWPSHVD). Residues 259–286 (LQWLEDRLEQNQQRLQELEQEKEDLMEE) are a coiled coil.

Belongs to the peptidase M67A family. BRCC36 subfamily.

Its function is as follows. Metalloprotease that specifically cleaves 'Lys-63'-linked polyubiquitin chains. This Mus musculus (Mouse) protein is Lys-63-specific deubiquitinase BRCC36-like.